The sequence spans 192 residues: Putative 3-methyladenine DNA glycosylase (192 aa).

The protein belongs to the DNA glycosylase MPG family.

The chain is Putative 3-methyladenine DNA glycosylase from Bdellovibrio bacteriovorus (strain ATCC 15356 / DSM 50701 / NCIMB 9529 / HD100).